The following is a 341-amino-acid chain: tRNA N6-adenosine threonylcarbamoyltransferase (341 aa).

The Fe cation site is built by histidine 111 and histidine 115. Substrate is bound by residues 134–138 (LVSGG), aspartate 167, glycine 180, and asparagine 276. Fe cation is bound at residue aspartate 304.

It belongs to the KAE1 / TsaD family. Fe(2+) is required as a cofactor.

The protein resides in the cytoplasm. The enzyme catalyses L-threonylcarbamoyladenylate + adenosine(37) in tRNA = N(6)-L-threonylcarbamoyladenosine(37) in tRNA + AMP + H(+). Required for the formation of a threonylcarbamoyl group on adenosine at position 37 (t(6)A37) in tRNAs that read codons beginning with adenine. Is involved in the transfer of the threonylcarbamoyl moiety of threonylcarbamoyl-AMP (TC-AMP) to the N6 group of A37, together with TsaE and TsaB. TsaD likely plays a direct catalytic role in this reaction. The chain is tRNA N6-adenosine threonylcarbamoyltransferase from Pseudomonas putida (strain ATCC 700007 / DSM 6899 / JCM 31910 / BCRC 17059 / LMG 24140 / F1).